The chain runs to 687 residues: Chloride channel protein ClC-Kb (687 aa).

Residues 1-50 (MEELVGLREGASKKPVPLQELWGPCPRIRRNIQGGLEWLKERLFRVGEDW) lie on the Cytoplasmic side of the membrane. Helical transmembrane passes span 51–82 (YFLV…KWLY) and 91–111 (LRYL…SGFS). The segment at residues 116-127 (PSSGGSGIPEVK) is an intramembrane region (helical). Ser-121 is a binding site for chloride. 2 helical membrane passes run 141–160 (IKNF…TGST) and 161–180 (IFLG…AAYL). Positions 203-224 (AGAAVGVATVFAAPISGVLFSI) form an intramembrane region, helical. Residues 236–255 (YWRGFFAATCGAFMFHLLAV) traverse the membrane as a helical segment. Ca(2+) is bound by residues Glu-259, Glu-261, Asp-278, and Glu-281. 2 helical membrane passes run 282-310 (IFFF…LFFL) and 325-342 (PLYS…TYPP). Positions 349-360 (ASRLSMSEHLET) form an intramembrane region, helical. The next 2 helical transmembrane spans lie at 400–420 (GTLV…TTIP) and 421–440 (IPAG…GRLF). Phe-426 lines the chloride pocket. An intramembrane region (helical) is located at residues 464 to 496 (GAYALAGAAAFSGAVTHTLSTALLAFEVTGQLV). A helical membrane pass occupies residues 500 to 520 (PVLMAVLAANAISQSFQPSFY). Residues 521–687 (DGTIIVKKLP…STLTNPPAPK (167 aa)) are Cytoplasmic-facing. 2 consecutive CBS domains span residues 551 to 609 (MNCA…EPAS) and 626 to 687 (CPTQ…PAPK).

The protein belongs to the chloride channel (TC 2.A.49) family. CLCNKB subfamily. Homodimer. Interacts with BSND. N-glycosylated. In terms of tissue distribution, specifically expressed in the kidney, predominantly in the outer medulla and cortex. All nephron segments expressing BSND also express CLCNK proteins.

The protein resides in the basolateral cell membrane. It catalyses the reaction chloride(in) = chloride(out). It carries out the reaction iodide(out) = iodide(in). The enzyme catalyses nitrate(in) = nitrate(out). The catalysed reaction is bromide(in) = bromide(out). In terms of biological role, anion-selective channel permeable to small monovalent anions with ion selectivity for chloride &gt; bromide &gt; nitrate &gt; iodide. Forms a homodimeric channel where each subunit has its own ion conduction pathway. May conduct double-barreled currents controlled by two types of gates, two fast gates that control each subunit independently and a slow common gate that opens and shuts off both subunits simultaneously. Assembles with the regulatory subunit BSND/Barttin for sorting at the basolateral plasma membrane domain and functional switch to the ion conducting state. CLCNKB:BSND channels display mostly a linear current-voltage relationship controlled by common gate. Mediates chloride conductance along nephron segments, namely the thick ascending limb of Henle's loop, convoluted tubule and the collecting duct, contributing to the maintenance of systemic acid-base and electrolyte homeostasis. Conducts chloride currents in the stria vascularis of the inner ear to establish the endocochlear potential necessary for normal hearing. The polypeptide is Chloride channel protein ClC-Kb (Mus musculus (Mouse)).